The primary structure comprises 1123 residues: Mediator of RNA polymerase II transcription subunit 14 (1123 aa).

A disordered region spans residues 450–484; sequence KQSDASDEQQNNIEPNEESLEDLREDNNEDESEPQ.

This sequence belongs to the Mediator complex subunit 14 family. As to quaternary structure, component of the Mediator complex.

The protein localises to the nucleus. In terms of biological role, component of the Mediator complex, a coactivator involved in the regulated transcription of nearly all RNA polymerase II-dependent genes. Mediator functions as a bridge to convey information from gene-specific regulatory proteins to the basal RNA polymerase II transcription machinery. Mediator is recruited to promoters by direct interactions with regulatory proteins and serves as a scaffold for the assembly of a functional preinitiation complex with RNA polymerase II and the general transcription factors. This Debaryomyces hansenii (strain ATCC 36239 / CBS 767 / BCRC 21394 / JCM 1990 / NBRC 0083 / IGC 2968) (Yeast) protein is Mediator of RNA polymerase II transcription subunit 14 (RGR1).